Here is a 491-residue protein sequence, read N- to C-terminus: Ketol-acid reductoisomerase (NADP(+)) (491 aa).

In terms of domain architecture, KARI N-terminal Rossmann spans 15–208; sequence AQLGKCRFMG…GGHRAGVLES (194 aa). NADP(+)-binding positions include 45 to 48, R68, R76, S78, and 108 to 110; these read CGAQ and DKQ. H132 is a catalytic residue. G158 is an NADP(+) binding site. 2 KARI C-terminal knotted domains span residues 209-344 and 345-484; these read SFVA…TAPQ and YEGK…MTDM. Residues D217, E221, E389, and E393 each coordinate Mg(2+). Residue S414 participates in substrate binding.

It belongs to the ketol-acid reductoisomerase family. It depends on Mg(2+) as a cofactor.

It carries out the reaction (2R)-2,3-dihydroxy-3-methylbutanoate + NADP(+) = (2S)-2-acetolactate + NADPH + H(+). It catalyses the reaction (2R,3R)-2,3-dihydroxy-3-methylpentanoate + NADP(+) = (S)-2-ethyl-2-hydroxy-3-oxobutanoate + NADPH + H(+). The protein operates within amino-acid biosynthesis; L-isoleucine biosynthesis; L-isoleucine from 2-oxobutanoate: step 2/4. Its pathway is amino-acid biosynthesis; L-valine biosynthesis; L-valine from pyruvate: step 2/4. Its function is as follows. Involved in the biosynthesis of branched-chain amino acids (BCAA). Catalyzes an alkyl-migration followed by a ketol-acid reduction of (S)-2-acetolactate (S2AL) to yield (R)-2,3-dihydroxy-isovalerate. In the isomerase reaction, S2AL is rearranged via a Mg-dependent methyl migration to produce 3-hydroxy-3-methyl-2-ketobutyrate (HMKB). In the reductase reaction, this 2-ketoacid undergoes a metal-dependent reduction by NADPH to yield (R)-2,3-dihydroxy-isovalerate. This is Ketol-acid reductoisomerase (NADP(+)) from Escherichia coli O6:K15:H31 (strain 536 / UPEC).